Reading from the N-terminus, the 352-residue chain is MDYQVSSPTYDIDYYTSEPCQKINVKQIAARLLPPLYSLVFIFGFVGNILVVLILINCKRLKSMTDIYLLNLAISDLLFLLTVPFWAHYAAAQWDFGNTMCQLLTGLYFIGFFSGIFFIILLTIDRYLAIVHAVFALKARTVTFGVVTSVITWVVAVFASLPGIIFTRSQREGLHYTCSSHFPYSQYQFWKNFQTLKIVILGLVLPLLVMVICYSGILKTLLRCRNEKKRHRAVRLIFTIMIVYFLFWAPYNIVLLLNTFQEFFGLNNCSSSNRLDQAMQVTETLGMTHCCINPIIYAFVGEKFRNYLLVFFQKHIAKRFCKCCSIFQQEASERASSVYTRSTGEQEISVGL.

Over 1–30 the chain is Extracellular; sequence MDYQVSSPTYDIDYYTSEPCQKINVKQIAA. Y3 is modified (sulfotyrosine). O-linked (GalNAc...) serine glycosylation is found at S6 and S7. A sulfotyrosine mark is found at Y10, Y14, and Y15. Disulfide bonds link C20-C269 and C101-C178. The chain crosses the membrane as a helical span at residues 31–58; it reads RLLPPLYSLVFIFGFVGNILVVLILINC. Residues 59–68 are Cytoplasmic-facing; that stretch reads KRLKSMTDIY. The chain crosses the membrane as a helical span at residues 69–89; that stretch reads LLNLAISDLLFLLTVPFWAHY. Residues 90–102 are Extracellular-facing; it reads AAAQWDFGNTMCQ. Residues 103–124 form a helical membrane-spanning segment; sequence LLTGLYFIGFFSGIFFIILLTI. The Cytoplasmic portion of the chain corresponds to 125 to 141; it reads DRYLAIVHAVFALKART. A helical transmembrane segment spans residues 142-166; it reads VTFGVVTSVITWVVAVFASLPGIIF. Residues 167 to 198 lie on the Extracellular side of the membrane; it reads TRSQREGLHYTCSSHFPYSQYQFWKNFQTLKI. A helical transmembrane segment spans residues 199–218; the sequence is VILGLVLPLLVMVICYSGIL. Over 219 to 235 the chain is Cytoplasmic; the sequence is KTLLRCRNEKKRHRAVR. Residues 236–260 form a helical membrane-spanning segment; sequence LIFTIMIVYFLFWAPYNIVLLLNTF. At 261–277 the chain is on the extracellular side; sequence QEFFGLNNCSSSNRLDQ. The helical transmembrane segment at 278–301 threads the bilayer; sequence AMQVTETLGMTHCCINPIIYAFVG. The Cytoplasmic portion of the chain corresponds to 302–352; the sequence is EKFRNYLLVFFQKHIAKRFCKCCSIFQQEASERASSVYTRSTGEQEISVGL. Residues C321, C323, and C324 are each lipidated (S-palmitoyl cysteine). 4 positions are modified to phosphoserine; by BARK1: S336, S337, S342, and S349.

It belongs to the G-protein coupled receptor 1 family. Interacts with PRAF2. Efficient ligand binding to CCL3/MIP-1alpha and CCL4/MIP-1beta requires sulfation, O-glycosylation and sialic acid modifications. Glycosylation on Ser-6 is required for efficient binding of CCL4. Interacts with GRK2. Interacts with ARRB1 and ARRB2. Interacts with CNIH4. Interacts with S100A4; this interaction stimulates T-lymphocyte chemotaxis. Sulfated on at least 2 of the N-terminal tyrosines. Sulfation is required for efficient binding of the chemokines, CCL3 and CCL4. Post-translationally, palmitoylation in the C-terminal is important for cell surface expression. In terms of processing, phosphorylation on serine residues in the C-terminal is stimulated by binding CC chemokines especially by APO-RANTES. O-glycosylated, but not N-glycosylated. Ser-6 appears to be the major site even if Ser-7 may be also O-glycosylated. Also sialylated glycans present which contribute to chemokine binding. Thr-16 and Ser-17 may also be glycosylated and, if so, with small moieties such as a T-antigen.

It localises to the cell membrane. Its function is as follows. Receptor for a number of inflammatory CC-chemokines including CCL3/MIP-1-alpha, CCL4/MIP-1-beta and RANTES and subsequently transduces a signal by increasing the intracellular calcium ion level. May play a role in the control of granulocytic lineage proliferation or differentiation. Participates in T-lymphocyte migration to the infection site by acting as a chemotactic receptor. This is C-C chemokine receptor type 5 (CCR5) from Cercocebus galeritus (Tana river mangabey).